Here is a 425-residue protein sequence, read N- to C-terminus: Glutamate-1-semialdehyde 2,1-aminomutase (425 aa).

Residue Lys265 is modified to N6-(pyridoxal phosphate)lysine.

Belongs to the class-III pyridoxal-phosphate-dependent aminotransferase family. HemL subfamily. Homodimer. Requires pyridoxal 5'-phosphate as cofactor.

The protein localises to the cytoplasm. The enzyme catalyses (S)-4-amino-5-oxopentanoate = 5-aminolevulinate. It functions in the pathway porphyrin-containing compound metabolism; protoporphyrin-IX biosynthesis; 5-aminolevulinate from L-glutamyl-tRNA(Glu): step 2/2. The chain is Glutamate-1-semialdehyde 2,1-aminomutase from Thiobacillus denitrificans (strain ATCC 25259 / T1).